Consider the following 691-residue polypeptide: Elongation factor G (691 aa).

The tr-type G domain occupies 8-283 (EDYRNIGIMA…AVVDFLPSPL (276 aa)). GTP-binding positions include 17-24 (AHIDAGKT), 81-85 (DTPGH), and 135-138 (NKMD).

The protein belongs to the TRAFAC class translation factor GTPase superfamily. Classic translation factor GTPase family. EF-G/EF-2 subfamily.

Its subcellular location is the cytoplasm. In terms of biological role, catalyzes the GTP-dependent ribosomal translocation step during translation elongation. During this step, the ribosome changes from the pre-translocational (PRE) to the post-translocational (POST) state as the newly formed A-site-bound peptidyl-tRNA and P-site-bound deacylated tRNA move to the P and E sites, respectively. Catalyzes the coordinated movement of the two tRNA molecules, the mRNA and conformational changes in the ribosome. The chain is Elongation factor G from Parvibaculum lavamentivorans (strain DS-1 / DSM 13023 / NCIMB 13966).